Consider the following 391-residue polypeptide: Histidinol-phosphate aminotransferase (391 aa).

Lys-245 bears the N6-(pyridoxal phosphate)lysine mark.

It belongs to the class-II pyridoxal-phosphate-dependent aminotransferase family. Histidinol-phosphate aminotransferase subfamily. Homodimer. Requires pyridoxal 5'-phosphate as cofactor.

It catalyses the reaction L-histidinol phosphate + 2-oxoglutarate = 3-(imidazol-4-yl)-2-oxopropyl phosphate + L-glutamate. The protein operates within amino-acid biosynthesis; L-histidine biosynthesis; L-histidine from 5-phospho-alpha-D-ribose 1-diphosphate: step 7/9. The polypeptide is Histidinol-phosphate aminotransferase (Bifidobacterium adolescentis (strain ATCC 15703 / DSM 20083 / NCTC 11814 / E194a)).